The following is a 251-amino-acid chain: Phosphate import ATP-binding protein PstB (251 aa).

In terms of domain architecture, ABC transporter spans 5–246 (IKIRGVNFFY…PRDKRTEDYI (242 aa)). 37–44 (GPSGCGKS) serves as a coordination point for ATP.

Belongs to the ABC transporter superfamily. Phosphate importer (TC 3.A.1.7) family. The complex is composed of two ATP-binding proteins (PstB), two transmembrane proteins (PstC and PstA) and a solute-binding protein (PstS).

It is found in the cell membrane. It catalyses the reaction phosphate(out) + ATP + H2O = ADP + 2 phosphate(in) + H(+). Functionally, part of the ABC transporter complex PstSACB involved in phosphate import. Responsible for energy coupling to the transport system. The polypeptide is Phosphate import ATP-binding protein PstB (Dehalococcoides mccartyi (strain CBDB1)).